Reading from the N-terminus, the 523-residue chain is Cilia- and flagella-associated protein 157 (523 aa).

Positions 1-31 (MAPKKKPNKGGKEMQGKKIGGKKDASGTKTP) are disordered. Positions 10–26 (GGKEMQGKKIGGKKDAS) are enriched in basic and acidic residues. Residue threonine 30 is modified to Phosphothreonine. Coiled coils occupy residues 32 to 191 (ELAM…LEKK), 248 to 274 (VQLL…LENT), and 302 to 371 (GTEE…VLIQ). The disordered stretch occupies residues 419 to 440 (QPDMGSHQDKQPQGLSKESQRI). The segment covering 429–440 (QPQGLSKESQRI) has biased composition (polar residues).

It belongs to the CFAP157 family. Interacts with TUBB and TUBA4A. Interacts with CEP350. As to expression, specifically expressed in tissues containing motile cilia.

The protein resides in the cytoplasm. It is found in the cytoskeleton. The protein localises to the cilium basal body. Its function is as follows. Specifically required during spermatogenesis for flagellum morphogenesis and sperm motility. May be required to suppress the formation of supernumerary axonemes and ensure a correct ultrastructure. The chain is Cilia- and flagella-associated protein 157 from Mus musculus (Mouse).